Consider the following 395-residue polypeptide: Acid ceramidase (395 aa).

The N-terminal stretch at 1–21 is a signal peptide; the sequence is MLGRSRLALVLLAAAVSCAVA. Cys31 and Cys340 are disulfide-bonded. Cys143 serves as the catalytic Nucleophile. N-linked (GlcNAc...) asparagine glycans are attached at residues Asn173, Asn195, Asn259, Asn286, Asn342, and Asn348. Cysteines 388 and 392 form a disulfide.

This sequence belongs to the acid ceramidase family. As to quaternary structure, heterodimer; disulfide-linked. The heterodimer is composed of the disulfide-linked alpha and beta chains produced by autocatalytic cleavage of the precursor. N-glycosylated. In terms of processing, proteolytically cleaved into two chains alpha and beta that remain associated via a disulfide bond. Cleavage gives rise to a conformation change that activates the enzyme. The same catalytic Cys residue mediates the autoproteolytic cleavage and subsequent hydrolysis of lipid substrates. The beta chain may undergo an additional C-terminal processing.

It is found in the lysosome. It localises to the secreted. The enzyme catalyses an N-acylsphing-4-enine + H2O = sphing-4-enine + a fatty acid. The catalysed reaction is N-dodecanoylsphing-4-enine + H2O = dodecanoate + sphing-4-enine. It catalyses the reaction N-tetradecanoylsphing-4-enine + H2O = tetradecanoate + sphing-4-enine. It carries out the reaction N-hexadecanoylsphing-4-enine + H2O = sphing-4-enine + hexadecanoate. The enzyme catalyses N-octadecanoylsphing-4-enine + H2O = sphing-4-enine + octadecanoate. The catalysed reaction is N-dodecanoyl-(4R)-hydroxysphinganine + H2O = (4R)-hydroxysphinganine + dodecanoate. It catalyses the reaction N-(dodecanoyl)-sphinganine + H2O = dodecanoate + sphinganine. It carries out the reaction N-(acetyl)-sphing-4-enine + H2O = sphing-4-enine + acetate. The enzyme catalyses N-(hexanoyl)sphing-4-enine + H2O = hexanoate + sphing-4-enine. The catalysed reaction is N-octanoylsphing-4-enine + H2O = octanoate + sphing-4-enine. It catalyses the reaction N-(9Z-octadecenoyl)-sphing-4-enine + H2O = sphing-4-enine + (9Z)-octadecenoate. It carries out the reaction N-dodecanoylethanolamine + H2O = dodecanoate + ethanolamine. It participates in lipid metabolism; sphingolipid metabolism. Functionally, lysosomal ceramidase that hydrolyzes sphingolipid ceramides into sphingosine and free fatty acids at acidic pH. Ceramides, sphingosine, and its phosphorylated form sphingosine-1-phosphate are bioactive lipids that mediate cellular signaling pathways regulating several biological processes including cell proliferation, apoptosis and differentiation. Has a higher catalytic efficiency towards C12-ceramides versus other ceramides. Also catalyzes the reverse reaction allowing the synthesis of ceramides from fatty acids and sphingosine. For the reverse synthetic reaction, the natural sphingosine D-erythro isomer is more efficiently utilized as a substrate compared to D-erythro-dihydrosphingosine and D-erythro-phytosphingosine, while the fatty acids with chain lengths of 12 or 14 carbons are the most efficiently used. Also has an N-acylethanolamine hydrolase activity. By regulating the levels of ceramides, sphingosine and sphingosine-1-phosphate in the epidermis, mediates the calcium-induced differentiation of epidermal keratinocytes. Also indirectly regulates tumor necrosis factor/TNF-induced apoptosis. By regulating the intracellular balance between ceramides and sphingosine, in adrenocortical cells, probably also acts as a regulator of steroidogenesis. This is Acid ceramidase from Macaca fascicularis (Crab-eating macaque).